A 466-amino-acid chain; its full sequence is Transcription factor eupR (466 aa).

The segment covering Met1–Ser18 has biased composition (polar residues). The segment at Met1 to Arg22 is disordered. The segment at residues Cys32–Cys62 is a DNA-binding region (zn(2)-C6 fungal-type).

The protein resides in the nucleus. Functionally, transcription factor; part of the gene cluster that mediates the biosynthesis of eupenifeldin, a bistropolone meroterpenoid that acts as an antitumor agent. This is Transcription factor eupR from Phoma sp.